We begin with the raw amino-acid sequence, 366 residues long: Ferrochelatase (366 aa).

Residues histidine 209 and glutamate 290 each contribute to the Fe cation site.

The protein belongs to the ferrochelatase family.

It is found in the cytoplasm. The catalysed reaction is heme b + 2 H(+) = protoporphyrin IX + Fe(2+). It participates in porphyrin-containing compound metabolism; protoheme biosynthesis; protoheme from protoporphyrin-IX: step 1/1. Its function is as follows. Catalyzes the ferrous insertion into protoporphyrin IX. The chain is Ferrochelatase from Teredinibacter turnerae (strain ATCC 39867 / T7901).